A 536-amino-acid polypeptide reads, in one-letter code: CTP synthase (536 aa).

Positions 1–268 are amidoligase domain; sequence MSFKSIFLTG…VDFLLSKFGF (268 aa). Ser14 contacts CTP. UTP is bound at residue Ser14. An ATP-binding site is contributed by 15 to 20; the sequence is SLGKGL. Residue Tyr55 coordinates L-glutamine. Position 72 (Asp72) interacts with ATP. Residues Asp72 and Glu142 each contribute to the Mg(2+) site. CTP contacts are provided by residues 149 to 151, 188 to 193, and Lys224; these read DIE and KTKPTQ. Residues 188 to 193 and Lys224 contribute to the UTP site; that span reads KTKPTQ. In terms of domain architecture, Glutamine amidotransferase type-1 spans 294–532; that stretch reads RIGLVGKYLE…LSAALDYSLE (239 aa). Gly353 contacts L-glutamine. Cys380 acts as the Nucleophile; for glutamine hydrolysis in catalysis. L-glutamine is bound by residues 381–384, Glu404, and Arg460; that span reads LGMQ. Residues His505 and Glu507 contribute to the active site.

It belongs to the CTP synthase family. In terms of assembly, homotetramer.

The enzyme catalyses UTP + L-glutamine + ATP + H2O = CTP + L-glutamate + ADP + phosphate + 2 H(+). The catalysed reaction is L-glutamine + H2O = L-glutamate + NH4(+). It catalyses the reaction UTP + NH4(+) + ATP = CTP + ADP + phosphate + 2 H(+). It participates in pyrimidine metabolism; CTP biosynthesis via de novo pathway; CTP from UDP: step 2/2. With respect to regulation, allosterically activated by GTP, when glutamine is the substrate; GTP has no effect on the reaction when ammonia is the substrate. The allosteric effector GTP functions by stabilizing the protein conformation that binds the tetrahedral intermediate(s) formed during glutamine hydrolysis. Inhibited by the product CTP, via allosteric rather than competitive inhibition. In terms of biological role, catalyzes the ATP-dependent amination of UTP to CTP with either L-glutamine or ammonia as the source of nitrogen. Regulates intracellular CTP levels through interactions with the four ribonucleotide triphosphates. The protein is CTP synthase of Chlamydia muridarum (strain MoPn / Nigg).